Reading from the N-terminus, the 2434-residue chain is ATP-binding cassette sub-family A member 2 (2434 aa).

An N-linked (GlcNAc...) asparagine glycan is attached at Asn-14. Helical transmembrane passes span 22–42 (PWVL…LLGL) and 54–74 (AFYT…QSLC). Asn-89, Asn-168, and Asn-173 each carry an N-linked (GlcNAc...) asparagine glycan. Position 271 is an N5-methylglutamine (Gln-271). 13 N-linked (GlcNAc...) asparagine glycosylation sites follow: Asn-305, Asn-368, Asn-379, Asn-420, Asn-432, Asn-476, Asn-484, Asn-494, Asn-530, Asn-549, Asn-590, Asn-600, and Asn-628. Residues 354–369 (RAPAPQAGSPSGPANS) are compositionally biased toward low complexity. The segment at 354–396 (RAPAPQAGSPSGPANSTGVGANTGPNTTVEEGTQSPVTPASPD) is disordered. The segment covering 370–396 (TGVGANTGPNTTVEEGTQSPVTPASPD) has biased composition (polar residues). The next 6 membrane-spanning stretches (helical) occupy residues 699–719 (FLFV…VYSV), 750–770 (VAWF…LTAI), 782–802 (VLII…FCFL), 813–833 (ASAC…YVAI), 857–877 (AFGL…GIQW), and 893–913 (LLAV…TWYI). The region spanning 990 to 1221 (VCVDKLTKVY…YGDGYRLTLV (232 aa)) is the ABC transporter 1 domain. Residue 1024 to 1031 (GHNGAGKT) participates in ATP binding. The tract at residues 1225 to 1246 (AEPGTSQEPGMASSPSGRPQLS) is disordered. Over residues 1228–1246 (GTSQEPGMASSPSGRPQLS) the composition is skewed to polar residues. Ser-1238 bears the Phosphoserine mark. Asn-1247 carries an N-linked (GlcNAc...) asparagine glycan. Phosphoserine occurs at positions 1327 and 1331. A helical transmembrane segment spans residues 1461 to 1481 (ILLPAFFVCVAMTVALSVPEI). 3 N-linked (GlcNAc...) asparagine glycosylation sites follow: Asn-1496, Asn-1549, and Asn-1557. The tract at residues 1587-1606 (NFVPPPPSPAPSDSPLSPDE) is disordered. A compositionally biased stretch (pro residues) spans 1589–1598 (VPPPPSPAPS). 3 N-linked (GlcNAc...) asparagine glycosylation sites follow: Asn-1613, Asn-1678, and Asn-1776. A run of 5 helical transmembrane segments spans residues 1793 to 1813 (VVIA…FVVF), 1842 to 1862 (VWDM…LFVF), 1873 to 1893 (FPAV…IMYP), 1906 to 1926 (VFLI…TFLL), and 1992 to 2012 (GLVA…MCQY). An ABC transporter 2 domain is found at 2051-2286 (VKIENLTKVY…FGDGYMITVR (236 aa)). N-linked (GlcNAc...) asparagine glycosylation is present at Asn-2055. 2088 to 2095 (GVNGAGKT) serves as a coordination point for ATP. Residue Thr-2411 is modified to Phosphothreonine.

This sequence belongs to the ABC transporter superfamily. ABCA family. Post-translationally, N-glycosylated. In terms of processing, methylated at Gln-271 by N6AMT1. In terms of tissue distribution, expressed at high levels in brain, at moderate levels in heart, kidney and lung, and at low levels in skeletal muscle, stomach, spleen, colon and pancreas. Not detected in the liver or small intestine. In brain, highly expressed in white matter and detected in oligodendrocytes. Expressed in cerebellum as well as the anterior commissure. Expressed mainly in the white matter but is also scattered in gray matter throughout the whole brain. Expressed in myelinating cells of both ventral and dorsal restricted regions in newborn spinal cord. Expressed in non-myelin-forming as well as in myelin-forming Schwann cells in the sciatic nerve.

The protein resides in the endosome membrane. Its subcellular location is the lysosome membrane. Its function is as follows. Probable transporter, its natural substrate has not been found yet. May have a role in macrophage lipid metabolism and neural development. May play a role in myelination, perhaps as a transporter for certain kinds of myelin chemical components. May play an important role in gamma-secretase processing of APP and thus in amyloid-beta peptide generation. Regulates esterification of plasma membrane cholesterol by modulation of sphingolipid metabolism. In terms of biological role, probable lipid transporter that modulates cholesterol sequestration in the late endosome/lysosome by regulating the intracellular sphingolipid metabolism, in turn participates in cholesterol homeostasis. May alter the transbilayer distribution of ceramide in the intraluminal membrane lipid bilayer, favoring its retention in the outer leaflet that results in increased acid ceramidase activity in the late endosome/lysosome, facilitating ceramide deacylation to sphingosine leading to the sequestration of free cholesterol in lysosomes. In addition regulates amyloid-beta production either by activating a signaling pathway that regulates amyloid precursor protein transcription through the modulation of sphingolipid metabolism or through its role in gamma-secretase processing of APP. May play a role in myelin formation. The protein is ATP-binding cassette sub-family A member 2 of Rattus norvegicus (Rat).